Consider the following 471-residue polypeptide: MTIAATALDYKVADISLAEWGRKEIDIAEKEMPGLMAIRNKYKGQKPLAGSRISGSLHMTIQTAVLIETLVELGADVRWASCNIFSTQDHAAAAIAVTGVPVFAWKGESLEEYWWCTRQILDFGNGLGPNLIVDDGGDATMMIILGYKVENNPSMFDKGGSNAEEKALFAQLKSIYDEDSTRWHKVAADMKGVSEETTTGVHRLYHMMEKGELLFPAINVNDSVTKSKFDNLYGCRESLADGIKRATDVMIAGKVAVVLGYGDVGKGCAHSMRSYGARVIVTEIDPICALQAAMEGFEVTTMDRAVKEGNIFVTTTGNKDVITLEHMKQMPDEAIVCNIGHFDNEIQVEPLNEYKGATKLNIKPQVDKYTFEDGHCIYMLAEGRLVNLGCATGHPSFVMSNSFTNQTLAQIELWKNDYEIGVYRLPKALDEEVARLHLEQIGVKLTTLSKEQADYIGVPVSGPYKPEHYRY.

Substrate-binding residues include T60, D135, and E196. 197 to 199 (TTT) lines the NAD(+) pocket. The substrate site is built by K226 and D230. NAD(+) is bound by residues N231, 260-265 (GYGDVG), E283, N318, 339-341 (IGH), and N387.

It belongs to the adenosylhomocysteinase family. It depends on NAD(+) as a cofactor.

The protein resides in the cytoplasm. The enzyme catalyses S-adenosyl-L-homocysteine + H2O = L-homocysteine + adenosine. It functions in the pathway amino-acid biosynthesis; L-homocysteine biosynthesis; L-homocysteine from S-adenosyl-L-homocysteine: step 1/1. Its function is as follows. May play a key role in the regulation of the intracellular concentration of adenosylhomocysteine. This is Adenosylhomocysteinase from Chlorobium phaeovibrioides (strain DSM 265 / 1930) (Prosthecochloris vibrioformis (strain DSM 265)).